Consider the following 657-residue polypeptide: Glycogen debranching enzyme (657 aa).

The active-site Nucleophile is Asp-336. Glu-371 functions as the Proton donor in the catalytic mechanism. Positions 460 to 479 (ANGEENRDGTNNNYSNNHGK) are disordered.

The protein belongs to the glycosyl hydrolase 13 family.

The enzyme catalyses Hydrolysis of (1-&gt;6)-alpha-D-glucosidic linkages to branches with degrees of polymerization of three or four glucose residues in limit dextrin.. It functions in the pathway glycan degradation; glycogen degradation. In terms of biological role, removes maltotriose and maltotetraose chains that are attached by 1,6-alpha-linkage to the limit dextrin main chain, generating a debranched limit dextrin. The sequence is that of Glycogen debranching enzyme from Shigella flexneri serotype 5b (strain 8401).